Consider the following 115-residue polypeptide: MPRRRRRRGSSGAGGRGRTCSRTVRAELSFSVSQVERSLREGHYAQRLSRTAPVYLAAVIEYLTAKVLELAGNEAQNSGERNITPLLLDMVVHNDRLLSTLFNTTTISQVAPGED.

The segment at 1–21 is disordered; sequence MPRRRRRRGSSGAGGRGRTCS. Positions 87–115 are docking domain; that stretch reads LLDMVVHNDRLLSTLFNTTTISQVAPGED.

This sequence belongs to the histone H2A family. As to quaternary structure, the nucleosome is a histone octamer containing two molecules each of H2A, H2B, H3 and H4 assembled in one H3-H4 heterotetramer and two H2A-H2B heterodimers. May be incorporated into a proportion of nucleosomes, replacing one or more H2A molecules. Present in mature sperm.

It localises to the nucleus. The protein resides in the chromosome. In terms of biological role, atypical histone H2A which can replace conventional H2A in some nucleosomes and is associated with active transcription and mRNA processing. Nucleosomes wrap and compact DNA into chromatin, limiting DNA accessibility to the cellular machineries which require DNA as a template. Histones thereby play a central role in transcription regulation, DNA repair, DNA replication and chromosomal stability. Nucleosomes containing this histone are less rigid and organize less DNA than canonical nucleosomes in vivo. They are enriched in actively transcribed genes and associate with the elongating form of RNA polymerase. They associate with spliceosome components and are required for mRNA splicing. May participate in spermatogenesis. The chain is Histone H2A-Bbd type 2/3 from Homo sapiens (Human).